The primary structure comprises 175 residues: Small ribosomal subunit protein uS5 (175 aa).

One can recognise an S5 DRBM domain in the interval 19–82 (WVDRLVSVNR…DDAKKNVIRV (64 aa)).

This sequence belongs to the universal ribosomal protein uS5 family. In terms of assembly, part of the 30S ribosomal subunit. Contacts proteins S4 and S8.

With S4 and S12 plays an important role in translational accuracy. Functionally, located at the back of the 30S subunit body where it stabilizes the conformation of the head with respect to the body. The polypeptide is Small ribosomal subunit protein uS5 (Salinibacter ruber (strain DSM 13855 / M31)).